Consider the following 232-residue polypeptide: Phosphate-specific transport system accessory protein PhoU homolog 1 (232 aa).

The protein belongs to the PhoU family. In terms of assembly, homodimer.

It is found in the cytoplasm. Its function is as follows. Plays a role in the regulation of phosphate uptake. This is Phosphate-specific transport system accessory protein PhoU homolog 1 (phoU1) from Thermotoga maritima (strain ATCC 43589 / DSM 3109 / JCM 10099 / NBRC 100826 / MSB8).